A 356-amino-acid chain; its full sequence is MAGLKLQAVTKSWDGKTQVIQPLTLDVADGEFIVMVGPSGCGKSTLLRMVAGLERVTSGDIWIDRKRVTEMEPKDRGIAIVFQNYALYPHMSVEENMAWGLKIRGMSKAHIEERVREAARILELDGLLKRRPRELSGGQRQRVAMGRAIVREPAVFLFDEPLSNLDAKLRVQMRLELQHLHRRLRTTSLYVTHDQVEAMTLAQRVMVMNKGVAEQIGTPVEVYEKPASRFVASFIGSPAMNLLDGVISASGDRFELPGGLALPIGAGYRGHAGRKMTLGIRPEHIALSSQAEGGVPLTVDTLEILGADNLAHGRWGDQKLVVRLAHQQRPAAGSTLWLHLPEHQRHLFDGETGQRV.

The region spanning 4–235 (LKLQAVTKSW…PASRFVASFI (232 aa)) is the ABC transporter domain. Position 37–44 (37–44 (GPSGCGKS)) interacts with ATP.

Belongs to the ABC transporter superfamily. sn-glycerol-3-phosphate importer (TC 3.A.1.1.3) family. In terms of assembly, the complex is composed of two ATP-binding proteins (UgpC), two transmembrane proteins (UgpA and UgpE) and a solute-binding protein (UgpB).

The protein localises to the cell inner membrane. It carries out the reaction sn-glycerol 3-phosphate(out) + ATP + H2O = sn-glycerol 3-phosphate(in) + ADP + phosphate + H(+). Functionally, part of the ABC transporter complex UgpBAEC involved in sn-glycerol-3-phosphate (G3P) import. Responsible for energy coupling to the transport system. The polypeptide is sn-glycerol-3-phosphate import ATP-binding protein UgpC (Salmonella paratyphi A (strain ATCC 9150 / SARB42)).